The primary structure comprises 339 residues: MSGQLERCEREWHELEGEFQELQETHRIYKQKLEELNALQTSCSSSINKQKTRLKDLKLTLQRYKRHASREEAELVQQMGANIKERQNVFFDMEAYLPKKNGLYLNLVLGNVNVTLLSNQAKFAYKDEYEKFKLYLTIILLLGAVACRFFLHYRVTDEVFNFLLVWYYCTLTIRESILISNGSRIKGWWVSHHYVSTFLSGVMLTWPNGLIYQKFRNQFLAFSIFQSCVQFLQYYYQRGCLYRLRALGERNHLDLTVEGFQSWMWRGLTFLLPFLFCGHFWQLYNAVTLFELSSHEECREWQVFVLALTFLVLFLGNFLTTLKVVHTKLQQNRSKAKKP.

A coiled-coil region spans residues 1-77; sequence MSGQLERCER…ASREEAELVQ (77 aa). Transmembrane regions (helical) follow at residues 102–124, 132–152, 159–179, 187–207, 270–290, and 302–322; these read GLYLNLVLGNVNVTLLSNQAKFA, FKLYLTIILLLGAVACRFFLH, VFNFLLVWYYCTLTIRESILI, GWWVSHHYVSTFLSGVMLTWP, FLLPFLFCGHFWQLYNAVTLF, and QVFVLALTFLVLFLGNFLTTL.

It belongs to the TMEM120 family. As to quaternary structure, heterooligomer with TMEM120A.

The protein localises to the nucleus inner membrane. Necessary for efficient adipogenesis. Does not show ion channel activity. This Bos taurus (Bovine) protein is Transmembrane protein 120B (TMEM120B).